The chain runs to 210 residues: MADAKELKQVLTGPIINNNPIALQILGVCSALAVTSKLETALVMTIALTAVTAFSNLFISLIRNHIPSSVRIIVQMTIIASLVIVVDQVLQAYAYAISKQLSVFVGLIITNCIVMGRAEAYAMKTPPMMSFMDGIGNGLGYGAILLSVGVVRELFGNGSLFGVEILSKISDGGWYQPNGLLLLPPSAFFLIGGLIWLIRTYKPEQVEAKG.

6 helical membrane passes run 14–34 (PIIN…ALAV), 42–62 (LVMT…ISLI), 72–92 (IIVQ…VLQA), 96–116 (AISK…IVMG), 131–151 (FMDG…VGVV), and 178–198 (NGLL…IWLI).

This sequence belongs to the NqrDE/RnfAE family. As to quaternary structure, composed of six subunits; NqrA, NqrB, NqrC, NqrD, NqrE and NqrF.

Its subcellular location is the cell inner membrane. The enzyme catalyses a ubiquinone + n Na(+)(in) + NADH + H(+) = a ubiquinol + n Na(+)(out) + NAD(+). In terms of biological role, NQR complex catalyzes the reduction of ubiquinone-1 to ubiquinol by two successive reactions, coupled with the transport of Na(+) ions from the cytoplasm to the periplasm. NqrA to NqrE are probably involved in the second step, the conversion of ubisemiquinone to ubiquinol. This chain is Na(+)-translocating NADH-quinone reductase subunit D, found in Shewanella frigidimarina (strain NCIMB 400).